The chain runs to 20 residues: Methyl-coenzyme M reductase subunit gamma (20 aa).

Residues Ala-1–His-20 form a disordered region.

It belongs to the methyl-coenzyme M reductase gamma subunit family. In terms of assembly, MCR from M.thermophila is a heterotrimer composed of an alpha, a beta, and a gamma subunit. Coenzyme F430 is required as a cofactor.

It is found in the cytoplasm. It carries out the reaction coenzyme B + methyl-coenzyme M = methane + coenzyme M-coenzyme B heterodisulfide. It participates in one-carbon metabolism; methyl-coenzyme M reduction; methane from methyl-coenzyme M: step 1/1. Functionally, component of the methyl-coenzyme M reductase (MCR) I that catalyzes the reductive cleavage of methyl-coenzyme M (CoM-S-CH3 or 2-(methylthio)ethanesulfonate) using coenzyme B (CoB or 7-mercaptoheptanoylthreonine phosphate) as reductant which results in the production of methane and the mixed heterodisulfide of CoB and CoM (CoM-S-S-CoB). This is the final step in methanogenesis. The chain is Methyl-coenzyme M reductase subunit gamma from Methanosarcina thermophila.